The following is a 314-amino-acid chain: 4-hydroxy-3-methylbut-2-enyl diphosphate reductase (314 aa).

Residue Cys-12 coordinates [4Fe-4S] cluster. (2E)-4-hydroxy-3-methylbut-2-enyl diphosphate-binding residues include His-41 and His-74. Positions 41 and 74 each coordinate dimethylallyl diphosphate. Residues His-41 and His-74 each contribute to the isopentenyl diphosphate site. Cys-96 is a [4Fe-4S] cluster binding site. His-124 lines the (2E)-4-hydroxy-3-methylbut-2-enyl diphosphate pocket. Residue His-124 participates in dimethylallyl diphosphate binding. Residue His-124 participates in isopentenyl diphosphate binding. The Proton donor role is filled by Glu-126. Residue Thr-168 participates in (2E)-4-hydroxy-3-methylbut-2-enyl diphosphate binding. Residue Cys-198 participates in [4Fe-4S] cluster binding. The (2E)-4-hydroxy-3-methylbut-2-enyl diphosphate site is built by Ser-226, Ser-227, Asn-228, and Ser-270. Dimethylallyl diphosphate contacts are provided by Ser-226, Ser-227, Asn-228, and Ser-270. Residues Ser-226, Ser-227, Asn-228, and Ser-270 each contribute to the isopentenyl diphosphate site.

Belongs to the IspH family. Requires [4Fe-4S] cluster as cofactor.

The enzyme catalyses isopentenyl diphosphate + 2 oxidized [2Fe-2S]-[ferredoxin] + H2O = (2E)-4-hydroxy-3-methylbut-2-enyl diphosphate + 2 reduced [2Fe-2S]-[ferredoxin] + 2 H(+). It carries out the reaction dimethylallyl diphosphate + 2 oxidized [2Fe-2S]-[ferredoxin] + H2O = (2E)-4-hydroxy-3-methylbut-2-enyl diphosphate + 2 reduced [2Fe-2S]-[ferredoxin] + 2 H(+). It functions in the pathway isoprenoid biosynthesis; dimethylallyl diphosphate biosynthesis; dimethylallyl diphosphate from (2E)-4-hydroxy-3-methylbutenyl diphosphate: step 1/1. Its pathway is isoprenoid biosynthesis; isopentenyl diphosphate biosynthesis via DXP pathway; isopentenyl diphosphate from 1-deoxy-D-xylulose 5-phosphate: step 6/6. Catalyzes the conversion of 1-hydroxy-2-methyl-2-(E)-butenyl 4-diphosphate (HMBPP) into a mixture of isopentenyl diphosphate (IPP) and dimethylallyl diphosphate (DMAPP). Acts in the terminal step of the DOXP/MEP pathway for isoprenoid precursor biosynthesis. This is 4-hydroxy-3-methylbut-2-enyl diphosphate reductase from Pseudomonas fluorescens (strain Pf0-1).